Consider the following 107-residue polypeptide: Small ribosomal subunit protein uS17 (107 aa).

It belongs to the universal ribosomal protein uS17 family. As to quaternary structure, part of the 30S ribosomal subunit.

One of the primary rRNA binding proteins, it binds specifically to the 5'-end of 16S ribosomal RNA. The sequence is that of Small ribosomal subunit protein uS17 from Aquifex aeolicus (strain VF5).